A 202-amino-acid chain; its full sequence is Putative NADH dehydrogenase/NAD(P)H nitroreductase SCO7141 (202 aa).

The protein belongs to the nitroreductase family. HadB/RutE subfamily. It depends on FMN as a cofactor.

The polypeptide is Putative NADH dehydrogenase/NAD(P)H nitroreductase SCO7141 (Streptomyces coelicolor (strain ATCC BAA-471 / A3(2) / M145)).